The sequence spans 955 residues: Kinesin-like protein NACK2 (955 aa).

A Kinesin motor domain is found at 36–357; the sequence is KILVTIRVRP…LCFATSAKEV (322 aa). 120 to 127 is an ATP binding site; that stretch reads GQTSSGKT. 2 coiled-coil regions span residues 366–443 and 566–604; these read VVAE…LKGS and KASLKEEIARLRSQESNIASLEQKLENVQRSIDELVMHL.

It belongs to the TRAFAC class myosin-kinesin ATPase superfamily. Kinesin family. KIN-7 subfamily.

It localises to the cytoplasm. The protein resides in the nucleus. It is found in the cytoskeleton. The protein localises to the phragmoplast. Its function is as follows. Probable plus end-directed motor protein that may function in the NACK-PQR (NPK1-NQK1/MEK1-NRK1) MAP kinase signaling pathway, which is essential for somatic cell cytokinesis, especially for the cell-plate formation and its expansion. May regulate the activity and the localization of NPK1, probably by association through the non-catalytic region of the kinase. This Nicotiana tabacum (Common tobacco) protein is Kinesin-like protein NACK2 (NACK2).